A 138-amino-acid chain; its full sequence is Acidic phospholipase A2 beta (138 aa).

The signal sequence occupies residues 1–16 (MRTLWIVAVLLLGVEG). 7 disulfides stabilise this stretch: Cys-42–Cys-131, Cys-44–Cys-60, Cys-59–Cys-111, Cys-65–Cys-138, Cys-66–Cys-104, Cys-73–Cys-97, and Cys-91–Cys-102. Tyr-43, Gly-45, and Gly-47 together coordinate Ca(2+). Residue His-63 is part of the active site. Ca(2+) is bound at residue Asp-64. Asp-105 is a catalytic residue.

Belongs to the phospholipase A2 family. Group II subfamily. D49 sub-subfamily. As to quaternary structure, dimer. The cofactor is Ca(2+). In terms of tissue distribution, expressed by the venom gland.

The protein resides in the secreted. It carries out the reaction a 1,2-diacyl-sn-glycero-3-phosphocholine + H2O = a 1-acyl-sn-glycero-3-phosphocholine + a fatty acid + H(+). In terms of biological role, PLA2 catalyzes the calcium-dependent hydrolysis of the 2-acyl groups in 3-sn-phosphoglycerides. The chain is Acidic phospholipase A2 beta from Crotalus adamanteus (Eastern diamondback rattlesnake).